We begin with the raw amino-acid sequence, 298 residues long: Heat stress transcription factor C-2a (298 aa).

The segment at 105-128 is disordered; it reads SSGGGGAKRKEEAGGCGGGGEAAA. Residues 145–181 form a hydrophobic repeat HR-A/B region; sequence LRREQREIEGRVAAMWRRVQETERRPKQMLAFLVKVV. A Nuclear localization signal motif is present at residues 213 to 216; the sequence is KRPR.

It belongs to the HSF family. Class C subfamily. In terms of assembly, homotrimer. Post-translationally, exhibits temperature-dependent phosphorylation.

The protein resides in the nucleus. Transcriptional regulator that specifically binds DNA of heat shock promoter elements (HSE). This is Heat stress transcription factor C-2a (HSFC2A) from Oryza sativa subsp. japonica (Rice).